Consider the following 327-residue polypeptide: Mitochondrial substrate carrier family protein A (327 aa).

A disordered region spans residues 1 to 36 (MVINNQNNNNQNNNQNNNNKNDNLNNSTTTTTTTAT). Residues 1 to 48 (MVINNQNNNNQNNNQNNNNKNDNLNNSTTTTTTTATTTKSSTLFHSND) are Mitochondrial intermembrane-facing. 3 Solcar repeats span residues 43–132 (LFHS…FKRM), 140–224 (ISVI…IKEK), and 233–323 (PPLY…AITL). The chain crosses the membrane as a helical span at residues 49–66 (FFSGLIAGIVSRTLTAPL). Residues 67-106 (ERIKILNQVEVILKDGTKYNRIIPAFKVIIKEEGIAGLFR) lie on the Mitochondrial matrix side of the membrane. The helical transmembrane segment at 107–127 (GNFVNIIKAGPQSAIRFYSYG) threads the bilayer. Residues 128–145 (AFKRMASEPDGSISVINR) lie on the Mitochondrial intermembrane side of the membrane. A helical transmembrane segment spans residues 146–166 (MWAGASSGVVSVALTHPLDVI). Topologically, residues 167–192 (KTHITVIAPTAATIKNVTKGIYRDLG) are mitochondrial matrix. The helical transmembrane segment at 193–213 (IIGFFRGLSAGILNIAPFAAL) threads the bilayer. Topologically, residues 214 to 238 (NFTFYETIKEKTQQYILKSPPLYAP) are mitochondrial intermembrane. The chain crosses the membrane as a helical span at residues 239 to 259 (SIYGAISGGLTMTILYPLDVV). At 260–303 (KRRIMLQHFDRNQLPIYKNFIDAIIKITKTEGISALYKGIRPAY) the chain is on the mitochondrial matrix side. A helical transmembrane segment spans residues 304 to 324 (LKVIPTVSINFLIYEGAITLF). Residues 325 to 327 (EKK) lie on the Mitochondrial intermembrane side of the membrane.

The protein belongs to the mitochondrial carrier (TC 2.A.29) family.

The protein resides in the mitochondrion inner membrane. Calcium-dependent mitochondrial solute carrier. Mitochondrial solute carriers shuttle metabolites, nucleotides, and cofactors through the mitochondrial inner membrane. The protein is Mitochondrial substrate carrier family protein A (mcfA) of Dictyostelium discoideum (Social amoeba).